We begin with the raw amino-acid sequence, 327 residues long: Ribosomal RNA small subunit methyltransferase H (327 aa).

Residues 36-38, aspartate 55, leucine 89, aspartate 103, and glutamine 110 each bind S-adenosyl-L-methionine; that span reads GGH. The tract at residues 286-327 is disordered; that stretch reads GAEPASDTEIEQNARAGSVRLRAAERTAAEPGRAHNPTGGVR.

The protein belongs to the methyltransferase superfamily. RsmH family.

It localises to the cytoplasm. It catalyses the reaction cytidine(1402) in 16S rRNA + S-adenosyl-L-methionine = N(4)-methylcytidine(1402) in 16S rRNA + S-adenosyl-L-homocysteine + H(+). Its function is as follows. Specifically methylates the N4 position of cytidine in position 1402 (C1402) of 16S rRNA. The chain is Ribosomal RNA small subunit methyltransferase H from Parafrankia sp. (strain EAN1pec).